Here is a 282-residue protein sequence, read N- to C-terminus: ADP-ribosyl cyclase/cyclic ADP-ribose hydrolase (282 aa).

Positions 1–24 (MSPVAIIACVCLAVTLTSISPSEA) are cleaved as a signal peptide. 5 cysteine pairs are disulfide-bonded: cysteine 39–cysteine 58, cysteine 75–cysteine 155, cysteine 136–cysteine 149, cysteine 230–cysteine 251, and cysteine 263–cysteine 272.

The protein belongs to the ADP-ribosyl cyclase family. Post-translationally, has different isoforms which may be the result of different amounts of phosphorylation. Immature occoyctes. Oocytes.

The protein localises to the cytoplasmic vesicle. It catalyses the reaction NAD(+) = cyclic ADP-beta-D-ribose + nicotinamide + H(+). The catalysed reaction is nicotinate + NADP(+) = nicotinate-adenine dinucleotide phosphate + nicotinamide. The enzyme catalyses 2'-phospho-cyclic ADP-ribose + nicotinate = nicotinate-adenine dinucleotide phosphate. Activity is presumably regulated by its sequestration in vesicles before egg fertilization. After fertilization and upon NADase release, it could then be regulated via its potential phosphorylation sites. Its function is as follows. Synthesizes cyclic ADP-ribose (cADPR), a second messenger for calcium mobilization from endoplasmic reticulum; ADP-ribose is a minor product. Synthesizes the Ca(2+) mobilizer nicotinate-adenine dinucleotide phosphate from 2'-phospho-cADPR and nicotinic acid as well as from NADP(+) and nicotinic acid; with NADP(+) as substrate preferentially catalyzes NADP(+) hydrolysis rather than NAADP(+) synthesis, about 70-fold better at pH 7.4. Has cADPR hydrolase activity at very high enzyme concentrations, which is probably not physiological. The conversion of NAD(+) into ADP-ribose is also only observed at high enzyme concentrations and results from the hydrolysis of cADP-ribose. In Aplysia californica (California sea hare), this protein is ADP-ribosyl cyclase/cyclic ADP-ribose hydrolase.